The following is a 465-amino-acid chain: Fujikurins efflux protein FFUJ_12242 (465 aa).

The tract at residues 1-66 (MATNVGGAVD…AAKAHDEGPP (66 aa)) is disordered. Over residues 11–28 (NSRRSISDNRHDPEKPAE) the composition is skewed to basic and acidic residues. 7 helical membrane passes run 70 to 90 (TAAW…PGWI), 115 to 135 (WIPS…GIIF), 142 to 162 (PLII…SLAK), 175 to 195 (SAIG…TWFL), 200 to 220 (AAMG…PIMI), 231 to 251 (WALR…CLTV), and 274 to 294 (PAFA…YIPI). The N-linked (GlcNAc...) asparagine glycan is linked to asparagine 310. The next 5 membrane-spanning stretches (helical) occupy residues 314–334 (YLVA…GYGA), 342–362 (MFII…IPAT), 368–388 (IGYA…VGAL), 404–424 (IVFL…GAIL), and 430–450 (GWVS…AIIL).

It belongs to the major facilitator superfamily. Monocarboxylate porter (TC 2.A.1.13) family.

It is found in the cell membrane. Functionally, efflux pump that may be involved in the secretion of fujikurins. This chain is Fujikurins efflux protein FFUJ_12242, found in Gibberella fujikuroi (strain CBS 195.34 / IMI 58289 / NRRL A-6831) (Bakanae and foot rot disease fungus).